The sequence spans 721 residues: Polyribonucleotide nucleotidyltransferase (721 aa).

Residues D495 and D501 each contribute to the Mg(2+) site. The KH domain occupies 562-621 (PRITTIKIRPERIKDIIGPGGKTIKDITARTGTSINIEDDGSVSIASPNQDKVEEAIKMI). Residues 631-699 (GRIYLGTVRK…RSGKIRLSRK (69 aa)) form the S1 motif domain. A disordered region spans residues 699–721 (KEALADSAKKSEGTEPPKGEPAK).

This sequence belongs to the polyribonucleotide nucleotidyltransferase family. Mg(2+) serves as cofactor.

It localises to the cytoplasm. It carries out the reaction RNA(n+1) + phosphate = RNA(n) + a ribonucleoside 5'-diphosphate. Involved in mRNA degradation. Catalyzes the phosphorolysis of single-stranded polyribonucleotides processively in the 3'- to 5'-direction. In Anaeromyxobacter sp. (strain K), this protein is Polyribonucleotide nucleotidyltransferase.